Consider the following 705-residue polypeptide: Elongation factor G (705 aa).

In terms of domain architecture, tr-type G spans 8-290 (ERYRNFGIMA…GVVHLLPSPA (283 aa)). GTP is bound by residues 17–24 (AHIDAGKT), 88–92 (DTPGH), and 142–145 (NKMD). The interval 290-309 (ADRPPVQGIDENEKEDTRDA) is disordered.

It belongs to the TRAFAC class translation factor GTPase superfamily. Classic translation factor GTPase family. EF-G/EF-2 subfamily.

Its subcellular location is the cytoplasm. In terms of biological role, catalyzes the GTP-dependent ribosomal translocation step during translation elongation. During this step, the ribosome changes from the pre-translocational (PRE) to the post-translocational (POST) state as the newly formed A-site-bound peptidyl-tRNA and P-site-bound deacylated tRNA move to the P and E sites, respectively. Catalyzes the coordinated movement of the two tRNA molecules, the mRNA and conformational changes in the ribosome. The polypeptide is Elongation factor G (Xanthomonas campestris pv. campestris (strain 8004)).